Here is a 337-residue protein sequence, read N- to C-terminus: uncharacterized protein (337 aa).

Residues 291 to 314 (NKTRQCSNTKTTTKSTMTPINNGF) are disordered. Residues 299 to 308 (TKTTTKSTMT) show a composition bias toward low complexity.

This is an uncharacterized protein from Acanthamoeba polyphaga mimivirus (APMV).